Consider the following 564-residue polypeptide: Probable diguanylate cyclase DgcQ (564 aa).

The next 2 helical transmembrane spans lie at 20–40 (LGPG…STLL) and 360–380 (IALT…WYVI). Positions 428–563 (HPFSVIQVDL…GRNRVFASDN (136 aa)) constitute a GGDEF domain. Aspartate 436 provides a ligand contact to Mg(2+). Positions 444, 449, and 453 each coordinate substrate. Glutamate 479 contributes to the Mg(2+) binding site. Glutamate 479 serves as the catalytic Proton acceptor.

As to quaternary structure, homodimer. It depends on Mg(2+) as a cofactor.

The protein resides in the cell inner membrane. It catalyses the reaction 2 GTP = 3',3'-c-di-GMP + 2 diphosphate. The protein operates within glycan metabolism; bacterial cellulose biosynthesis. Its pathway is purine metabolism; 3',5'-cyclic di-GMP biosynthesis. Functionally, catalyzes the synthesis of cyclic-di-GMP (c-di-GMP) via the condensation of 2 GTP molecules. Cyclic-di-GMP is a second messenger which controls cell surface-associated traits in bacteria. Involved in the regulation of cellulose production. The sequence is that of Probable diguanylate cyclase DgcQ from Escherichia coli (strain K12).